The primary structure comprises 441 residues: Methionine gamma-lyase (441 aa).

The interval 1-25 (MAHFLETQEPLVFSGKKRNDRDDED) is disordered. Position 248 is an N6-(pyridoxal phosphate)lysine (K248).

This sequence belongs to the trans-sulfuration enzymes family. As to quaternary structure, homotetramer. Pyridoxal 5'-phosphate serves as cofactor. In terms of tissue distribution, expressed in roots, stems, siliques, leaves, flowers and seeds after imbibition (at protein level). Transcripts accumulate in dry mature seeds, but at protein level, only present upon imbibition.

It localises to the cytoplasm. The catalysed reaction is L-methionine + H2O = methanethiol + 2-oxobutanoate + NH4(+). Its function is as follows. Catalyzes the degradation of L-methionine to alpha-ketobutyrate, methanethiol and ammonia. Exhibits a high activity toward L-methionine, L-ethionine, L-homocysteine and seleno-L-methionine, but not L-cysteine. Involved in an alternative cysteine biosynthesis pathway to the reverse trans-sulfuration pathway (methionine-&gt;homocysteine-&gt;cystathionine-&gt;cysteine) in which methanethiol is an intermediate. Also mediates an alternative isoleucine biosynthesis pathway in which 2-ketobutyrate is an intermediate. This chain is Methionine gamma-lyase (MGL), found in Arabidopsis thaliana (Mouse-ear cress).